We begin with the raw amino-acid sequence, 451 residues long: NAC domain containing protein 52 (451 aa).

Residues 1-21 (MGRESVAVVTAPPSATAPGTA) form a disordered region. The NAC domain occupies 27 to 178 (LAPGFRFHPT…AYVLCRVFHK (152 aa)). The DNA-binding element occupies 126 to 184 (LGMKKTLVFHSGRAPDGLRTNWVMHEYRLVEYETEKNGNLVQDAYVLCRVFHKNNIGPP). Disordered stretches follow at residues 255–337 (DQQN…TTTT) and 370–400 (KKEK…KVND). Residues 256–270 (QQNHHENDLKPEEHN) show a composition bias toward basic and acidic residues. Residues 272–292 (NNNYDENEETLKREQMEEEER) adopt a coiled-coil conformation. A compositionally biased stretch (low complexity) spans 318–337 (ESNNNSSRNTQDHCSSTTTT). Residues 370–384 (KKEKPQQPLRPHKEP) are compositionally biased toward basic and acidic residues. A coiled-coil region spans residues 398–446 (VNDLQKEIHQMSVERETFKLEMMSAEAMISILQSRIDALRQENEELKKN).

As to quaternary structure, interacts with JMJ14 and NAC050. As to expression, mostly expressed in floral organs, and, at low levels, in other organs.

The protein resides in the nucleus. Transcriptional repressor that binds to the motif 5'-(C/T)A(C/A)G-3' in the promoter of target genes. Also binds to the 5'-CTTGNNNNNCAAG-3' consensus sequence in chromatin. Can bind to the mitochondrial dysfunction motif (MDM) present in the upstream regions of mitochondrial dysfunction stimulon (MDS) genes involved in mitochondrial retrograde regulation (MRR). Together with NAC050 and JMJ14, regulates gene expression and flowering time by associating with the histone demethylase JMJ14, probably by the promotion of RNA-mediated gene silencing. Regulates siRNA-dependent post-transcriptional gene silencing (PTGS) through SGS3 expression modulation. Required during pollen development. The polypeptide is NAC domain containing protein 52 (Arabidopsis thaliana (Mouse-ear cress)).